The chain runs to 341 residues: Holliday junction branch migration complex subunit RuvB (341 aa).

The segment at 1 to 22 is disordered; it reads MSETAGKGVTMPEIMQSSYPDE. Positions 4–193 are large ATPase domain (RuvB-L); it reads TAGKGVTMPE…FGIISRLEFY (190 aa). ATP-binding positions include Ile32, Arg33, Gly74, Lys77, Thr78, Thr79, 140–142, Arg183, Tyr193, and Arg230; that span reads EDY. Residue Thr78 participates in Mg(2+) binding. The segment at 194–264 is small ATPAse domain (RuvB-S); sequence TPEELSQIIL…LVNHALQKLD (71 aa). The head domain (RuvB-H) stretch occupies residues 267–341; the sequence is EKGLDQMDRK…KAYKHLNLTD (75 aa). Arg322 and Arg327 together coordinate DNA.

The protein belongs to the RuvB family. In terms of assembly, homohexamer. Forms an RuvA(8)-RuvB(12)-Holliday junction (HJ) complex. HJ DNA is sandwiched between 2 RuvA tetramers; dsDNA enters through RuvA and exits via RuvB. An RuvB hexamer assembles on each DNA strand where it exits the tetramer. Each RuvB hexamer is contacted by two RuvA subunits (via domain III) on 2 adjacent RuvB subunits; this complex drives branch migration. In the full resolvosome a probable DNA-RuvA(4)-RuvB(12)-RuvC(2) complex forms which resolves the HJ.

It is found in the cytoplasm. The catalysed reaction is ATP + H2O = ADP + phosphate + H(+). Its function is as follows. The RuvA-RuvB-RuvC complex processes Holliday junction (HJ) DNA during genetic recombination and DNA repair, while the RuvA-RuvB complex plays an important role in the rescue of blocked DNA replication forks via replication fork reversal (RFR). RuvA specifically binds to HJ cruciform DNA, conferring on it an open structure. The RuvB hexamer acts as an ATP-dependent pump, pulling dsDNA into and through the RuvAB complex. RuvB forms 2 homohexamers on either side of HJ DNA bound by 1 or 2 RuvA tetramers; 4 subunits per hexamer contact DNA at a time. Coordinated motions by a converter formed by DNA-disengaged RuvB subunits stimulates ATP hydrolysis and nucleotide exchange. Immobilization of the converter enables RuvB to convert the ATP-contained energy into a lever motion, pulling 2 nucleotides of DNA out of the RuvA tetramer per ATP hydrolyzed, thus driving DNA branch migration. The RuvB motors rotate together with the DNA substrate, which together with the progressing nucleotide cycle form the mechanistic basis for DNA recombination by continuous HJ branch migration. Branch migration allows RuvC to scan DNA until it finds its consensus sequence, where it cleaves and resolves cruciform DNA. This Lawsonia intracellularis (strain PHE/MN1-00) protein is Holliday junction branch migration complex subunit RuvB.